A 564-amino-acid chain; its full sequence is MHSYDFALLLAFFVIVLLPAPWLGRFYYKVMEGQRTWLTPVLGPVEQGCYRLAGVNASQEQNWRQYTLALLAFNLVGFLLLFAVLLLQGYLPLNPQNLPGQEWSLAFNTAVSFVTNTNWQAYSGEASVSYLSQMLGLTVQNFVSPATGLAVLVVLCRGIARRSATTLGNFWVDMTRATLYGLLPLCLLLALLLVWQGVPQTFADYAHALTLQGADQTIPLGPAASQIAIKQLGTNGGGFFGVNSAHPFENPTAWSNLFEVASIILIPVALVFTFGHYVKDLRQSRAILACMLALFLIGGSTALWSEHQPNPALESTQVQQTAPLEGKESRFGTTGSVLWAVTTTAASNGSVNAMHDSLNPLTGMVAMVNMMVGEVIFGGVGAGLYGMLLFVLIAVFLAGLMIGRTPEYLGKKLQAREVQLLVATLLVMPVGVLVLGAIAASLPGPAGAVTNPGAHGFSQLLYAYTSGSANNGSAFAGFGANTVYHNLMIGLAMLIGRFGYILPILALAGSLAAKKSAPLGQNSFPTHGPLFTGLLLVTILLVGGLTFLPTLALGPIAEHLSLGF.

Transmembrane regions (helical) follow at residues 4–24, 67–87, 135–155, 179–199, 258–278, 286–306, 382–402, 420–440, 487–507, and 533–553; these read YDFA…PWLG, TLAL…VLLL, LGLT…LVVL, LYGL…QGVP, FEVA…GHYV, AILA…LWSE, AGLY…GLMI, LLVA…AIAA, LMIG…ILAL, and GLLL…TLAL.

This sequence belongs to the KdpA family. As to quaternary structure, the system is composed of three essential subunits: KdpA, KdpB and KdpC.

The protein localises to the cell inner membrane. Its function is as follows. Part of the high-affinity ATP-driven potassium transport (or Kdp) system, which catalyzes the hydrolysis of ATP coupled with the electrogenic transport of potassium into the cytoplasm. This subunit binds the periplasmic potassium ions and delivers the ions to the membrane domain of KdpB through an intramembrane tunnel. The polypeptide is Potassium-transporting ATPase potassium-binding subunit (Pseudomonas putida (strain ATCC 47054 / DSM 6125 / CFBP 8728 / NCIMB 11950 / KT2440)).